A 314-amino-acid polypeptide reads, in one-letter code: Olfactory receptor 5G3 (314 aa).

Over 1–24 (MEDKNQTVVTEFLLLGLTDHPYQK) the chain is Extracellular. Asn5 carries an N-linked (GlcNAc...) asparagine glycan. The chain crosses the membrane as a helical span at residues 25–45 (IVLFFMFLFVYLITLGGNLGM). Over 46–97 (ITLIWIDPRLHTPMYFFLRHLSFVDICSSSSVVPKMLCNIFAEKKDITFLGC) the chain is Cytoplasmic. Cys97 and Cys179 are disulfide-bonded. A helical transmembrane segment spans residues 98–118 (AAQMWFFGLFEAAECFLLAAM). The Extracellular portion of the chain corresponds to 119–143 (AYDRYVAICKPLLYTLIMSQQVCMQ). Residues 144–164 (LVVGPYAMALISTMTHTIFTF) traverse the membrane as a helical segment. Residues 165 to 167 (CLP) are Cytoplasmic-facing. Residues 168 to 188 (FCGSNIINHFFCDIFPLLSLA) traverse the membrane as a helical segment. At 189 to 196 (CADTWVNK) the chain is on the extracellular side. A helical transmembrane segment spans residues 197–217 (FVLFVLAGAIGVLSGLIIMVS). At 218-237 (YICILMTILKIQTADGKQKA) the chain is on the cytoplasmic side. The chain crosses the membrane as a helical span at residues 238 to 258 (FFTCFSHLAAVSILYGTLFLI). At 259 to 268 (YVRPSSSSSL) the chain is on the extracellular side. A helical transmembrane segment spans residues 269 to 289 (GIYKVISLFYTVVIPMVNPLI). Residues 290-314 (YSLRNKEVKDAFRRKIERKKFIIGR) lie on the Cytoplasmic side of the membrane.

This sequence belongs to the G-protein coupled receptor 1 family.

The protein localises to the cell membrane. Its function is as follows. Odorant receptor. This Homo sapiens (Human) protein is Olfactory receptor 5G3 (OR5G3).